A 137-amino-acid polypeptide reads, in one-letter code: Neutral phospholipase A2 ammodytin I2 (137 aa).

A signal peptide spans 1–16 (MRTLWIVAVCLIGVEG). Intrachain disulfides connect C42/C131, C44/C60, C59/C111, C65/C137, C66/C104, C73/C97, and C91/C102. Ca(2+) contacts are provided by Y43, G45, and G47. H63 is a catalytic residue. D64 is a binding site for Ca(2+). The active site involves D105.

This sequence belongs to the phospholipase A2 family. Group II subfamily. D49 sub-subfamily. Ca(2+) serves as cofactor. In terms of tissue distribution, expressed by the venom gland.

It is found in the secreted. It catalyses the reaction a 1,2-diacyl-sn-glycero-3-phosphocholine + H2O = a 1-acyl-sn-glycero-3-phosphocholine + a fatty acid + H(+). Snake venom phospholipase A2 (PLA2) that has enzymatic activity but is non-toxic. Displays low binding affinity and enzymatic activity on phosphatidylserine-containing vesicles and HEK-293 plasma membranes, in contrast to ammodytoxins that have high activity on these phospholipids. PLA2 catalyzes the calcium-dependent hydrolysis of the 2-acyl groups in 3-sn-phosphoglycerides. This Vipera ammodytes ammodytes (Western sand viper) protein is Neutral phospholipase A2 ammodytin I2.